Here is a 152-residue protein sequence, read N- to C-terminus: Small ribosomal subunit protein uS8m (152 aa).

This sequence belongs to the universal ribosomal protein uS8 family.

It is found in the mitochondrion. The protein is Small ribosomal subunit protein uS8m (mrps8) of Dictyostelium discoideum (Social amoeba).